Consider the following 248-residue polypeptide: Adenosylcobinamide-GDP ribazoletransferase (248 aa).

Transmembrane regions (helical) follow at residues 36–56 (FFLP…YLGL), 59–79 (FLPA…ITGG), 114–134 (GTIA…SLVL), 137–157 (YSIA…FLCL), 170–190 (IFIG…VLVL), and 199–219 (ATII…LLCL).

Belongs to the CobS family. Mg(2+) serves as cofactor.

Its subcellular location is the cell membrane. It catalyses the reaction alpha-ribazole + adenosylcob(III)inamide-GDP = adenosylcob(III)alamin + GMP + H(+). The catalysed reaction is alpha-ribazole 5'-phosphate + adenosylcob(III)inamide-GDP = adenosylcob(III)alamin 5'-phosphate + GMP + H(+). It functions in the pathway cofactor biosynthesis; adenosylcobalamin biosynthesis; adenosylcobalamin from cob(II)yrinate a,c-diamide: step 7/7. Its function is as follows. Joins adenosylcobinamide-GDP and alpha-ribazole to generate adenosylcobalamin (Ado-cobalamin). Also synthesizes adenosylcobalamin 5'-phosphate from adenosylcobinamide-GDP and alpha-ribazole 5'-phosphate. This chain is Adenosylcobinamide-GDP ribazoletransferase, found in Clostridium botulinum (strain Langeland / NCTC 10281 / Type F).